Reading from the N-terminus, the 543-residue chain is Chaperonin GroEL 1 (543 aa).

ATP is bound by residues 29 to 32, K50, 86 to 90, G414, and D493; these read TLGP and DGTTT. Residues 524 to 543 are disordered; that stretch reads KEDKGAPAGMGGMPPGGGMY. Over residues 531–543 the composition is skewed to gly residues; it reads AGMGGMPPGGGMY.

Belongs to the chaperonin (HSP60) family. In terms of assembly, forms a cylinder of 14 subunits composed of two heptameric rings stacked back-to-back. Interacts with the co-chaperonin GroES.

It localises to the cytoplasm. The catalysed reaction is ATP + H2O + a folded polypeptide = ADP + phosphate + an unfolded polypeptide.. In terms of biological role, together with its co-chaperonin GroES, plays an essential role in assisting protein folding. The GroEL-GroES system forms a nano-cage that allows encapsulation of the non-native substrate proteins and provides a physical environment optimized to promote and accelerate protein folding. The sequence is that of Chaperonin GroEL 1 from Syntrophobacter fumaroxidans (strain DSM 10017 / MPOB).